A 235-amino-acid polypeptide reads, in one-letter code: Phosphoribosylformylglycinamidine synthase subunit PurQ (235 aa).

In terms of domain architecture, Glutamine amidotransferase type-1 spans 5-235; sequence FGVVVFPGSN…LLNHVSIVAA (231 aa). Cys88 functions as the Nucleophile in the catalytic mechanism. Catalysis depends on residues His205 and Glu207.

As to quaternary structure, part of the FGAM synthase complex composed of 1 PurL, 1 PurQ and 2 PurS subunits.

The protein localises to the cytoplasm. The enzyme catalyses N(2)-formyl-N(1)-(5-phospho-beta-D-ribosyl)glycinamide + L-glutamine + ATP + H2O = 2-formamido-N(1)-(5-O-phospho-beta-D-ribosyl)acetamidine + L-glutamate + ADP + phosphate + H(+). It carries out the reaction L-glutamine + H2O = L-glutamate + NH4(+). Its pathway is purine metabolism; IMP biosynthesis via de novo pathway; 5-amino-1-(5-phospho-D-ribosyl)imidazole from N(2)-formyl-N(1)-(5-phospho-D-ribosyl)glycinamide: step 1/2. Functionally, part of the phosphoribosylformylglycinamidine synthase complex involved in the purines biosynthetic pathway. Catalyzes the ATP-dependent conversion of formylglycinamide ribonucleotide (FGAR) and glutamine to yield formylglycinamidine ribonucleotide (FGAM) and glutamate. The FGAM synthase complex is composed of three subunits. PurQ produces an ammonia molecule by converting glutamine to glutamate. PurL transfers the ammonia molecule to FGAR to form FGAM in an ATP-dependent manner. PurS interacts with PurQ and PurL and is thought to assist in the transfer of the ammonia molecule from PurQ to PurL. This is Phosphoribosylformylglycinamidine synthase subunit PurQ from Salinibacter ruber (strain DSM 13855 / M31).